The chain runs to 319 residues: Transcription factor STKL2 (319 aa).

The segment at Met-1 to Trp-119 is disordered. A compositionally biased stretch (basic and acidic residues) spans Glu-21–Asp-34. The span at Val-38–Thr-55 shows a compositional bias: polar residues. Residues Arg-89–Lys-112 show a composition bias toward basic and acidic residues.

Belongs to the GeBP family. In terms of tissue distribution, expressed strongly in leaves and flowers, weakly in roots, and very weakly in stems.

The protein localises to the nucleus. In terms of biological role, transcription repressor that binds DNA in a sequence-specific manner, 5'-GCCT-3', to regulate the expression of PGR. Acts as a modulatory component for the glucose-triggered developmental leaf growth process. This is Transcription factor STKL2 from Arabidopsis thaliana (Mouse-ear cress).